A 417-amino-acid polypeptide reads, in one-letter code: UPF0597 protein FMG_0209 (417 aa).

This sequence belongs to the UPF0597 family.

The polypeptide is UPF0597 protein FMG_0209 (Finegoldia magna (strain ATCC 29328 / DSM 20472 / WAL 2508) (Peptostreptococcus magnus)).